Reading from the N-terminus, the 333-residue chain is MGKNITVLGAGAWGTAFGQVLADAGNTVTMWAKEQQIVEGIRDHHHNAVRLPSVEKLPDNMTATGDRAEAVKNADIVVVAIAAQFARVALVEFKGLIPDHAIVVSLMKGIERGTNKRMDEVVRESLDLPADRFAAISGPNLSKEIADRHPAATVVACTNLDNATKVAEACTTSYFKPFVTTDVIGLEMCGSLKNVTALAVGMARGAGYGENTAAMIETRGLAELTALGVAAGADPKTFFGLAGVGDLIATCGSSLSRNYTFGANLGKGLTVEEATKVSNGVAEGVPTTDAVVALGNQLDVPTPLAYQMSRVLNEGISCSEMLAGLFGHEVTGE.

NADPH is bound by residues Trp-13, Lys-33, and Lys-108. Lys-108 and Gly-138 together coordinate sn-glycerol 3-phosphate. Ser-142 provides a ligand contact to NADPH. The sn-glycerol 3-phosphate site is built by Lys-193, Asp-246, Ser-256, Arg-257, and Asn-258. Lys-193 acts as the Proton acceptor in catalysis. Position 257 (Arg-257) interacts with NADPH. NADPH contacts are provided by Val-281 and Glu-283.

Belongs to the NAD-dependent glycerol-3-phosphate dehydrogenase family.

Its subcellular location is the cytoplasm. The catalysed reaction is sn-glycerol 3-phosphate + NAD(+) = dihydroxyacetone phosphate + NADH + H(+). It catalyses the reaction sn-glycerol 3-phosphate + NADP(+) = dihydroxyacetone phosphate + NADPH + H(+). It functions in the pathway membrane lipid metabolism; glycerophospholipid metabolism. Its function is as follows. Catalyzes the reduction of the glycolytic intermediate dihydroxyacetone phosphate (DHAP) to sn-glycerol 3-phosphate (G3P), the key precursor for phospholipid synthesis. The polypeptide is Glycerol-3-phosphate dehydrogenase [NAD(P)+] (Bifidobacterium longum (strain DJO10A)).